We begin with the raw amino-acid sequence, 298 residues long: Developmental pluripotency-associated protein 2 (298 aa).

The disordered stretch occupies residues 36–61 (NMEQMEPSVSSTSDVKLEKPKKYNPG). Residues 92–126 (INKVCRDTLRDWCQQLGLSTNGKKIEVYLRLHRHA) form the SAP domain.

Interacts with DPPA4. Expressed in embryonic stem cells. No expression is seen in 5 months embryo, mesenchymal stem cells, embryonic fibrocytes and adult tissues.

Its subcellular location is the nucleus. Binds to target gene promoters, including NKX2-5 and SYCE1, but not GATA4, and may be involved in the maintenance of the active epigenetic status of these genes. This Homo sapiens (Human) protein is Developmental pluripotency-associated protein 2 (DPPA2).